The sequence spans 327 residues: Phenylalanine--tRNA ligase alpha subunit (327 aa).

Mg(2+) is bound at residue Glu252.

The protein belongs to the class-II aminoacyl-tRNA synthetase family. Phe-tRNA synthetase alpha subunit type 1 subfamily. As to quaternary structure, tetramer of two alpha and two beta subunits. Mg(2+) serves as cofactor.

It localises to the cytoplasm. The catalysed reaction is tRNA(Phe) + L-phenylalanine + ATP = L-phenylalanyl-tRNA(Phe) + AMP + diphosphate + H(+). This Salmonella newport (strain SL254) protein is Phenylalanine--tRNA ligase alpha subunit.